Reading from the N-terminus, the 157-residue chain is Thioredoxin-T (157 aa).

Residues 2-107 form the Thioredoxin domain; sequence VYPVRNKDDL…LAKLMEKHAG (106 aa). Cysteines 32 and 35 form a disulfide. The tract at residues 132 to 157 is disordered; it reads ESSESDNDNNNVNEVSAHDENAVLEH. Positions 147 to 157 are enriched in basic and acidic residues; it reads SAHDENAVLEH.

The protein belongs to the thioredoxin family. In terms of tissue distribution, testis specific. Not expressed in the embryo. Becomes progressively more strongly expressed during larval and pupal development. In testis, it is strongly expressed in young spermatocytes, and postmeiotic spermatid stages, then expression decreases at the nuclear elongation stage. Strongly expressed in the waste bag, in which material no longer needed for the mature sperm is eliminated. Not expressed in the stem cells and spermatogonial cells.

The protein localises to the nucleus. The protein resides in the chromosome. Its function is as follows. Probably participates in various redox reactions through the reversible oxidation of its active center dithiol to a disulfide and catalyzes dithiol-disulfide exchange reactions. Its tissue specificity suggests a regulatory role in the germline. The polypeptide is Thioredoxin-T (TrxT) (Drosophila melanogaster (Fruit fly)).